The primary structure comprises 301 residues: Protein FdhE homolog (301 aa).

This sequence belongs to the FdhE family.

The protein localises to the cytoplasm. Functionally, necessary for formate dehydrogenase activity. This is Protein FdhE homolog from Shewanella baltica (strain OS185).